The following is a 361-amino-acid chain: Peptide chain release factor 1 (361 aa).

The residue at position 237 (Gln237) is an N5-methylglutamine. Residues 283–307 (AQQQEQQEQQSSTRKELIGSGDRSQ) form a disordered region.

The protein belongs to the prokaryotic/mitochondrial release factor family. In terms of processing, methylated by PrmC. Methylation increases the termination efficiency of RF1.

It localises to the cytoplasm. In terms of biological role, peptide chain release factor 1 directs the termination of translation in response to the peptide chain termination codons UAG and UAA. The sequence is that of Peptide chain release factor 1 from Vesicomyosocius okutanii subsp. Calyptogena okutanii (strain HA).